Here is a 106-residue protein sequence, read N- to C-terminus: Cell division protein FtsB (106 aa).

At 1–3 (MGK) the chain is on the cytoplasmic side. The helical transmembrane segment at 4 to 21 (LTLLLLVLLGWLQYSLWL) threads the bilayer. Residues 22–106 (GKNGIHDYVR…SRPSTPNNTQ (85 aa)) are Periplasmic-facing. Residues 29 to 70 (YVRVKNDVAMQERNNSKLKARNDQLSAEIDDLTGGQEAIEER) are a coiled coil.

The protein belongs to the FtsB family. Part of a complex composed of FtsB, FtsL and FtsQ.

Its subcellular location is the cell inner membrane. Its function is as follows. Essential cell division protein. May link together the upstream cell division proteins, which are predominantly cytoplasmic, with the downstream cell division proteins, which are predominantly periplasmic. This Photorhabdus laumondii subsp. laumondii (strain DSM 15139 / CIP 105565 / TT01) (Photorhabdus luminescens subsp. laumondii) protein is Cell division protein FtsB.